Reading from the N-terminus, the 811-residue chain is Abnormal pharyngeal pumping eat-20 (811 aa).

The first 20 residues, 1–20, serve as a signal peptide directing secretion; that stretch reads MTTFCRVLLIFGIYVAVSCA. Over 21 to 749 the chain is Extracellular; that stretch reads QSVEDDVFHF…GKQSSAVASW (729 aa). Residues asparagine 90, asparagine 171, and asparagine 232 are each glycosylated (N-linked (GlcNAc...) asparagine). EGF-like domains lie at 220–257, 258–293, and 301–335; these read PPSP…DRCE, LDVC…LLCE, and AAPI…ANCN. Disulfide bonds link cysteine 224/cysteine 235, cysteine 229/cysteine 245, cysteine 247/cysteine 256, cysteine 261/cysteine 272, cysteine 266/cysteine 281, cysteine 283/cysteine 292, cysteine 305/cysteine 314, cysteine 309/cysteine 323, and cysteine 325/cysteine 334. Asparagine 371 carries an N-linked (GlcNAc...) asparagine glycan. Disordered regions lie at residues 544–579, 592–659, and 690–739; these read FVSP…QVAT, FPTT…AIST, and PHPQ…HTSS. Residues 551–567 show a composition bias toward acidic residues; sequence DENEEEEEDETTDETEE. The segment covering 570–579 has biased composition (polar residues); the sequence is PTPSTMQVAT. Residues 597–612 show a composition bias toward acidic residues; that stretch reads DMEETDEEEDMTEEVT. Residues 626-639 are compositionally biased toward low complexity; that stretch reads PSSTTFTTEAPTTT. Composition is skewed to acidic residues over residues 640–655 and 705–717; these read MEEE…ESEE and IESE…ESNE. The chain crosses the membrane as a helical span at residues 750-770; sequence IIATIALIVLGSLLLATSLFV. Topologically, residues 771-811 are cytoplasmic; the sequence is LRYIRQSRKLHGKYNPAREEHNLSAAYAMPMSHIAKEERLI.

The protein resides in the membrane. Its function is as follows. Regulates pharyngeal pumping during feeding. The chain is Abnormal pharyngeal pumping eat-20 (eat-20) from Caenorhabditis briggsae.